Here is a 1019-residue protein sequence, read N- to C-terminus: Photoactivated adenylate cyclase subunit alpha (1019 aa).

Residues 55–148 (LRRLMYLSAS…GRMYGEWHMK (94 aa)) form the BLUF 1 domain. The Guanylate cyclase 1 domain maps to 204–332 (VVTFIYLVEF…DCINTASRIT (129 aa)). The region spanning 467-559 (LITLTYISQA…RVYGSPLDMT (93 aa)) is the BLUF 2 domain. The 130-residue stretch at 615–744 (VMLATDICSF…EVSARVMEVE (130 aa)) folds into the Guanylate cyclase 2 domain. The interval 822–861 (GTNAPGRGAPAGGIPSSPKVRPPGRTNSVSSYTPDPNEAL) is disordered. Over residues 825–839 (APGRGAPAGGIPSSP) the composition is skewed to low complexity. The segment covering 846–855 (RTNSVSSYTP) has biased composition (polar residues).

Belongs to the adenylyl cyclase class-4/guanylyl cyclase family. As to quaternary structure, heterotetramer of two alpha and two beta subunits. FAD is required as a cofactor.

It localises to the cell projection. Its subcellular location is the cilium. The protein resides in the flagellum. The enzyme catalyses ATP = 3',5'-cyclic AMP + diphosphate. Activity increased by up to 80-fold under blue light. In terms of biological role, acts as a blue light photoreceptor for the step-up photophobic response. Mediates photoavoidance. The polypeptide is Photoactivated adenylate cyclase subunit alpha (Euglena gracilis).